The chain runs to 181 residues: ATP synthase subunit delta (181 aa).

This sequence belongs to the ATPase delta chain family. As to quaternary structure, F-type ATPases have 2 components, F(1) - the catalytic core - and F(0) - the membrane proton channel. F(1) has five subunits: alpha(3), beta(3), gamma(1), delta(1), epsilon(1). F(0) has three main subunits: a(1), b(2) and c(10-14). The alpha and beta chains form an alternating ring which encloses part of the gamma chain. F(1) is attached to F(0) by a central stalk formed by the gamma and epsilon chains, while a peripheral stalk is formed by the delta and b chains.

It is found in the cell inner membrane. F(1)F(0) ATP synthase produces ATP from ADP in the presence of a proton or sodium gradient. F-type ATPases consist of two structural domains, F(1) containing the extramembraneous catalytic core and F(0) containing the membrane proton channel, linked together by a central stalk and a peripheral stalk. During catalysis, ATP synthesis in the catalytic domain of F(1) is coupled via a rotary mechanism of the central stalk subunits to proton translocation. Functionally, this protein is part of the stalk that links CF(0) to CF(1). It either transmits conformational changes from CF(0) to CF(1) or is implicated in proton conduction. This is ATP synthase subunit delta from Chlorobium phaeobacteroides (strain DSM 266 / SMG 266 / 2430).